Reading from the N-terminus, the 174-residue chain is Disulfide bond formation protein B (174 aa).

Topologically, residues 1 to 17 are cytoplasmic; sequence MSFQVVTGWLDNSPRRI. Residues 18–34 traverse the membrane as a helical segment; the sequence is FAFVSLASIGMLAFGQY. The Periplasmic portion of the chain corresponds to 35–52; the sequence is LQHVVGLEPCPMCIVQRY. Cysteine 44 and cysteine 47 form a disulfide bridge. A helical transmembrane segment spans residues 53–67; it reads ALVLVAIIAGLTGAS. Residues 68-74 are Cytoplasmic-facing; the sequence is GRKGLHL. A helical transmembrane segment spans residues 75–92; it reads GGAVLMLGSSGFGAYVAA. Topologically, residues 93 to 148 are periplasmic; that stretch reads RQSWLQWYPPEVVSCGRDFYGMIETFPLQRAIPMIFKGSGDCSKVDWTFLGGSIAN. A disulfide bond links cysteine 107 and cysteine 134. Residues 149–167 traverse the membrane as a helical segment; it reads WTFVVFGLIVLLSLALIWR. At 168-174 the chain is on the cytoplasmic side; that stretch reads RVSRRVS.

This sequence belongs to the DsbB family.

The protein localises to the cell inner membrane. Required for disulfide bond formation in some periplasmic proteins. Acts by oxidizing the DsbA protein. This is Disulfide bond formation protein B from Albidiferax ferrireducens (strain ATCC BAA-621 / DSM 15236 / T118) (Rhodoferax ferrireducens).